Reading from the N-terminus, the 386-residue chain is Succinate--CoA ligase [ADP-forming] subunit beta (386 aa).

The ATP-grasp domain occupies 9-244; the sequence is KDLLTAYQLP…PSQENIRDVL (236 aa). ATP-binding positions include Lys46, 53–55, Val102, and Glu107; that span reads GRG. Mg(2+)-binding residues include Asn199 and Asp213. Substrate-binding positions include Asn264 and 321 to 323; that span reads GIM.

Belongs to the succinate/malate CoA ligase beta subunit family. Heterotetramer of two alpha and two beta subunits. Requires Mg(2+) as cofactor.

The catalysed reaction is succinate + ATP + CoA = succinyl-CoA + ADP + phosphate. The enzyme catalyses GTP + succinate + CoA = succinyl-CoA + GDP + phosphate. Its pathway is carbohydrate metabolism; tricarboxylic acid cycle; succinate from succinyl-CoA (ligase route): step 1/1. In terms of biological role, succinyl-CoA synthetase functions in the citric acid cycle (TCA), coupling the hydrolysis of succinyl-CoA to the synthesis of either ATP or GTP and thus represents the only step of substrate-level phosphorylation in the TCA. The beta subunit provides nucleotide specificity of the enzyme and binds the substrate succinate, while the binding sites for coenzyme A and phosphate are found in the alpha subunit. The chain is Succinate--CoA ligase [ADP-forming] subunit beta from Chlamydia trachomatis serovar A (strain ATCC VR-571B / DSM 19440 / HAR-13).